Consider the following 419-residue polypeptide: DNA primase DnaG (419 aa).

The region spanning 168 to 244 (DTIIVVEGRS…KVDYVARAPE (77 aa)) is the Toprim domain. Mg(2+)-binding residues include Glu174, Asp218, and Asp220. Basic and acidic residues-rich tracts occupy residues 280–291 (KPAEEAVKREEE) and 306–316 (KAAKPPEEKPP). Residues 280-317 (KPAEEAVKREEEAAAEAKPPAPAVQEKAAKPPEEKPPT) form a disordered region.

This sequence belongs to the archaeal DnaG primase family. In terms of assembly, forms a ternary complex with MCM helicase and DNA. Component of the archaeal exosome complex. Requires Mg(2+) as cofactor.

The catalysed reaction is ssDNA + n NTP = ssDNA/pppN(pN)n-1 hybrid + (n-1) diphosphate.. RNA polymerase that catalyzes the synthesis of short RNA molecules used as primers for DNA polymerase during DNA replication. Also part of the exosome, which is a complex involved in RNA degradation. Acts as a poly(A)-binding protein that enhances the interaction between heteromeric, adenine-rich transcripts and the exosome. This Aeropyrum pernix (strain ATCC 700893 / DSM 11879 / JCM 9820 / NBRC 100138 / K1) protein is DNA primase DnaG.